The following is a 927-amino-acid chain: DNA-binding protein RFX6 (927 aa).

2 disordered regions span residues 1 to 21 (MAKV…PQLP) and 81 to 108 (NFSS…QKKS). A DNA-binding region (RFX-type winged-helix) is located at residues 123-198 (TLQWLEDNYI…YHYYGIGIKE (76 aa)).

Belongs to the RFX family. As to quaternary structure, interacts with RFX3. As to expression, in the adult pancreas, expression is restricted to the islets where it could be detected in all endocrine lineages.

The protein localises to the nucleus. Its function is as follows. Transcription factor required to direct islet cell differentiation during endocrine pancreas development. Specifically required for the differentiation of 4 of the 5 islet cell types and for the production of insulin. Not required for pancreatic PP (polypeptide-producing) cells differentiation. Acts downstream of NEUROG3 and regulates the transcription factors involved in beta-cell maturation and function, thereby restricting the expression of the beta-cell differentiation and specification genes, and thus the beta-cell fate choice. Activates transcription by forming a heterodimer with RFX3 and binding to the X-box in the promoter of target genes. Involved in glucose-stimulated insulin secretion by promoting insulin and L-type calcium channel gene transcription. This is DNA-binding protein RFX6 (Rfx6) from Mus musculus (Mouse).